The chain runs to 222 residues: uncharacterized protein (222 aa).

4 helical membrane passes run 23-43 (FFAA…TGLL), 67-87 (IWVL…IGYL), 157-177 (IVGG…LGNV), and 187-207 (IILG…WHGY).

The protein belongs to the DedA family.

It localises to the cell membrane. This is an uncharacterized protein from Mycobacterium leprae (strain TN).